The primary structure comprises 499 residues: Cysteine--tRNA ligase (499 aa).

Cys-31 contacts Zn(2+). The short motif at 33–43 (VTVYDLCHLGH) is the 'HIGH' region element. The Zn(2+) site is built by Cys-215, His-240, and Glu-244. Residues 272–276 (KMSKS) carry the 'KMSKS' region motif. Lys-275 contributes to the ATP binding site.

This sequence belongs to the class-I aminoacyl-tRNA synthetase family. As to quaternary structure, monomer. Zn(2+) is required as a cofactor.

It is found in the cytoplasm. It carries out the reaction tRNA(Cys) + L-cysteine + ATP = L-cysteinyl-tRNA(Cys) + AMP + diphosphate. The protein is Cysteine--tRNA ligase of Synechococcus sp. (strain WH7803).